The sequence spans 96 residues: Large ribosomal subunit protein eL14 (96 aa).

It belongs to the eukaryotic ribosomal protein eL14 family.

The sequence is that of Large ribosomal subunit protein eL14 from Metallosphaera sedula (strain ATCC 51363 / DSM 5348 / JCM 9185 / NBRC 15509 / TH2).